The primary structure comprises 76 residues: DNA gyrase inhibitor YacG (76 aa).

4 residues coordinate Zn(2+): C7, C10, C26, and C30.

The protein belongs to the DNA gyrase inhibitor YacG family. Interacts with GyrB. Requires Zn(2+) as cofactor.

In terms of biological role, inhibits all the catalytic activities of DNA gyrase by preventing its interaction with DNA. Acts by binding directly to the C-terminal domain of GyrB, which probably disrupts DNA binding by the gyrase. The polypeptide is DNA gyrase inhibitor YacG (Pseudoalteromonas translucida (strain TAC 125)).